The chain runs to 221 residues: Glutathione peroxidase 6 (221 aa).

The first 19 residues, 1 to 19, serve as a signal peptide directing secretion; that stretch reads MTQQFWGPCLFSLFMAVLA. Residue Cys-73 is part of the active site.

The protein belongs to the glutathione peroxidase family. As to expression, expressed in the Bowman glands.

It localises to the secreted. It carries out the reaction 2 glutathione + H2O2 = glutathione disulfide + 2 H2O. This chain is Glutathione peroxidase 6 (Gpx6), found in Rattus norvegicus (Rat).